We begin with the raw amino-acid sequence, 441 residues long: Na(+)/H(+) antiporter NhaA 2 (441 aa).

Transmembrane regions (helical) follow at residues 34–54 (VGGA…NSPW), 77–97 (LTLG…VVGL), 115–135 (ALPM…FVAV), 146–166 (GWAI…AVIS), 176–196 (FLLT…AVFY), 199–219 (EINL…ALCV), 225–245 (SWWL…ESGV), 249–269 (VAGV…AGGP), 290–310 (VAVP…VSGL), 317–337 (PITL…IFLT), 355–375 (WIDV…SLLI), and 389–409 (FVKV…AVLL).

The protein belongs to the NhaA Na(+)/H(+) (TC 2.A.33) antiporter family.

Its subcellular location is the cell membrane. It carries out the reaction Na(+)(in) + 2 H(+)(out) = Na(+)(out) + 2 H(+)(in). Functionally, na(+)/H(+) antiporter that extrudes sodium in exchange for external protons. The chain is Na(+)/H(+) antiporter NhaA 2 from Mycobacterium sp. (strain MCS).